A 192-amino-acid polypeptide reads, in one-letter code: MRRAEVQRTTLETMINVEFTMDGNGEFSGTSGLGFFDHMLTLFCKFGGFNLNLSCQGDLEVDDHHTVEDIGLVLGEAFSKALGDKKGIARFASGFYPMDEALMLIAVDISGRPYLAFEADFPPVLAGKFNYQMVEEFLRGFVQKAGITLHVREISGKNLHHKAEAIFKGLGRTLKVAVSVQGDELPSTKGVI.

It belongs to the imidazoleglycerol-phosphate dehydratase family.

It is found in the cytoplasm. The catalysed reaction is D-erythro-1-(imidazol-4-yl)glycerol 3-phosphate = 3-(imidazol-4-yl)-2-oxopropyl phosphate + H2O. Its pathway is amino-acid biosynthesis; L-histidine biosynthesis; L-histidine from 5-phospho-alpha-D-ribose 1-diphosphate: step 6/9. This Carboxydothermus hydrogenoformans (strain ATCC BAA-161 / DSM 6008 / Z-2901) protein is Imidazoleglycerol-phosphate dehydratase.